The sequence spans 487 residues: UDP-glycosyltransferase 85A7 (487 aa).

UDP-alpha-D-glucose-binding positions include 364–366 (CPQ), 381–389 (HCGWNSTLE), and 403–406 (FSEQ).

This sequence belongs to the UDP-glycosyltransferase family. In terms of tissue distribution, expressed in roots, shoots, leaves and flowers.

This is UDP-glycosyltransferase 85A7 (UGT85A7) from Arabidopsis thaliana (Mouse-ear cress).